Consider the following 99-residue polypeptide: RNA-binding protein HI_1333 (99 aa).

The CRM domain occupies 2 to 98; that stretch reads TTLSTKQKQF…SEEAKIQLPR (97 aa).

In Haemophilus influenzae (strain ATCC 51907 / DSM 11121 / KW20 / Rd), this protein is RNA-binding protein HI_1333.